We begin with the raw amino-acid sequence, 416 residues long: Enterobactin exporter EntS (416 aa).

The Cytoplasmic segment spans residues 1 to 21 (MNKQSWLLNLSLLKTHPAFRA). A helical membrane pass occupies residues 22–42 (VFLARFISIVSLGLLGVAVPV). At 43-55 (QIQMMTHSTWQVG) the chain is on the periplasmic side. Residues 56–76 (LSVTLTGGAMFVGLMVGGVLA) traverse the membrane as a helical segment. The Cytoplasmic segment spans residues 77–83 (DRYERKK). Residues 84-104 (VILLARGTCGIGFIGLCLNAL) form a helical membrane-spanning segment. Topologically, residues 105-109 (LPEPS) are periplasmic. Residues 110–130 (LLAIYLLGLWDGFFASLGVTA) traverse the membrane as a helical segment. The Cytoplasmic segment spans residues 131–156 (LLAATPALVGRENLMQAGAITMLTVR). Residues 157-177 (LGSVNSPMIGGLLLAIGGVAW) traverse the membrane as a helical segment. Position 178 (N178) is a topological domain, periplasmic. The chain crosses the membrane as a helical span at residues 179-199 (YGLAAAGTFITLLPLLSLPAL). Residues 200-218 (PPPPQPREHPLKSLLAGFR) lie on the Cytoplasmic side of the membrane. Residues 219–239 (FLLASPLVGGIALLGGLLTMA) form a helical membrane-spanning segment. At 240–256 (SAVRVLYPALADNWQMS) the chain is on the periplasmic side. Residues 257–277 (AAQIGFLYAAIPLGAAIGALT) form a helical membrane-spanning segment. Residues 278 to 287 (SGKLAHSARP) are Cytoplasmic-facing. Residues 288-307 (GLLMLLSTLGSFLAIGLFGL) traverse the membrane as a helical segment. Residues 308-313 (MPMWIL) lie on the Periplasmic side of the membrane. A helical membrane pass occupies residues 314–336 (GVVCLALFGWLSAVSSLLQYTML). Residues 337-356 (QTQTPEVMLGRINGLWTAQN) are Cytoplasmic-facing. The chain crosses the membrane as a helical span at residues 357 to 377 (VTGDAIGAALLGGLGAMMTPV). A topological domain (periplasmic) is located at residue A378. A helical membrane pass occupies residues 379–399 (SASASGFGLLIIGVLLLLVLV). Over 400–416 (ELRHFRQTPPQVTASDS) the chain is Cytoplasmic.

The protein belongs to the major facilitator superfamily. EntS (TC 2.A.1.38) family.

Its subcellular location is the cell inner membrane. Functionally, component of an export pathway for enterobactin. The sequence is that of Enterobactin exporter EntS from Shigella dysenteriae serotype 1 (strain Sd197).